Here is a 336-residue protein sequence, read N- to C-terminus: Fructose-1,6-bisphosphatase class 1 (336 aa).

Mg(2+)-binding residues include Glu-92, Asp-115, Leu-117, and Asp-118. Residues 118-121 (DGSS), Asn-211, Tyr-244, 262-264 (YLY), and Lys-274 each bind substrate. Glu-280 contributes to the Mg(2+) binding site.

This sequence belongs to the FBPase class 1 family. Homotetramer. Mg(2+) serves as cofactor.

It is found in the cytoplasm. The catalysed reaction is beta-D-fructose 1,6-bisphosphate + H2O = beta-D-fructose 6-phosphate + phosphate. The protein operates within carbohydrate biosynthesis; gluconeogenesis. The protein is Fructose-1,6-bisphosphatase class 1 of Aliivibrio fischeri (strain MJ11) (Vibrio fischeri).